We begin with the raw amino-acid sequence, 200 residues long: dITP/XTP pyrophosphatase (200 aa).

A substrate-binding site is contributed by T8–K13. The Mg(2+) site is built by E41 and D71. The active-site Proton acceptor is D71. Residues T72, F153–D156, K176, and H181–R182 each bind substrate.

The protein belongs to the HAM1 NTPase family. As to quaternary structure, homodimer. Mg(2+) is required as a cofactor.

The enzyme catalyses XTP + H2O = XMP + diphosphate + H(+). It catalyses the reaction dITP + H2O = dIMP + diphosphate + H(+). It carries out the reaction ITP + H2O = IMP + diphosphate + H(+). Functionally, pyrophosphatase that catalyzes the hydrolysis of nucleoside triphosphates to their monophosphate derivatives, with a high preference for the non-canonical purine nucleotides XTP (xanthosine triphosphate), dITP (deoxyinosine triphosphate) and ITP. Seems to function as a house-cleaning enzyme that removes non-canonical purine nucleotides from the nucleotide pool, thus preventing their incorporation into DNA/RNA and avoiding chromosomal lesions. The protein is dITP/XTP pyrophosphatase of Caldanaerobacter subterraneus subsp. tengcongensis (strain DSM 15242 / JCM 11007 / NBRC 100824 / MB4) (Thermoanaerobacter tengcongensis).